The following is a 291-amino-acid chain: MPSLKDVKVKIAGVKKTKQITKAMNMVASAKLRGAQQRIERFRPYAEKFYGMLGDLASKADGSAHPLLEVRDEIKTCGIVLATSDRGLCGSFNANLISTALKLAKQKAAEGKTVKFYCVGKKGRDTIRKADFEVVTAIADQMGSFDFQLANKLGLEVINHYLTGELDEVVLVYGEFVSTAKQLPITLPILPIASEKKDEAEAAPSKEYIYEPAVEGLLAELLPRFIKVQIYRGLLDTSASEHAARMAAMDNATRSCDDMIGALTLLFNKTRQASITRDLMDIVGGAEALKG.

It belongs to the ATPase gamma chain family. As to quaternary structure, F-type ATPases have 2 components, CF(1) - the catalytic core - and CF(0) - the membrane proton channel. CF(1) has five subunits: alpha(3), beta(3), gamma(1), delta(1), epsilon(1). CF(0) has three main subunits: a, b and c.

Its subcellular location is the cell inner membrane. Produces ATP from ADP in the presence of a proton gradient across the membrane. The gamma chain is believed to be important in regulating ATPase activity and the flow of protons through the CF(0) complex. This chain is ATP synthase gamma chain, found in Nitratidesulfovibrio vulgaris (strain ATCC 29579 / DSM 644 / CCUG 34227 / NCIMB 8303 / VKM B-1760 / Hildenborough) (Desulfovibrio vulgaris).